A 362-amino-acid chain; its full sequence is Caveolae-associated protein 4 (362 aa).

Residues 1–24 are disordered; sequence MEHNGSASNAGKIHQNRLSSVTED. A coiled-coil region spans residues 100–120; it reads IKDVKARVEKQQVRVTKVETK. Phosphoserine occurs at positions 152, 171, and 172. Over residues 227 to 255 the composition is skewed to basic and acidic residues; sequence PERRERLRQSGERLRQSGERLRQSGERFK. Residues 227–261 form a disordered region; that stretch reads PERRERLRQSGERLRQSGERLRQSGERFKKSISNA. Tyr324 carries the phosphotyrosine modification. The residue at position 334 (Thr334) is a Phosphothreonine. Position 353 is a phosphoserine (Ser353).

Belongs to the CAVIN family. In terms of assembly, component of the CAVIN complex composed of CAVIN1, CAVIN2, CAVIN3 and CAVIN4. Interacts with CAVIN1, CAV3, ADRA1A and ADRA1B. Interacts with CAVIN2; this augments the transactivation of NPPA. Interacts with MAPK1 and MAPK3. Expressed at much higher levels in cardiomyocytes than in non-cardiomyocytes.

It is found in the cytoplasm. It localises to the myofibril. The protein resides in the sarcomere. The protein localises to the cytosol. Its subcellular location is the cell membrane. It is found in the sarcolemma. It localises to the membrane. The protein resides in the caveola. In terms of biological role, modulates the morphology of formed caveolae in cardiomyocytes, but is not required for caveolar formation. Facilitates the recruitment of MAPK1/3 to caveolae within cardiomyocytes and regulates alpha-1 adrenergic receptor-induced hypertrophic responses in cardiomyocytes through MAPK1/3 activation. Contributes to proper membrane localization and stabilization of caveolin-3 (CAV3) in cardiomyocytes. Induces RHOA activation and activates NPPA transcription and myofibrillar organization through the Rho/ROCK signaling pathway. The sequence is that of Caveolae-associated protein 4 from Rattus norvegicus (Rat).